A 258-amino-acid polypeptide reads, in one-letter code: Lyso-ornithine lipid O-acyltransferase (258 aa).

The helical transmembrane segment at Leu-7–Leu-29 threads the bilayer.

This sequence belongs to the 1-acyl-sn-glycerol-3-phosphate acyltransferase family. OlsA subfamily.

The protein resides in the membrane. It catalyses the reaction a lyso-ornithine lipid + a fatty acyl-[ACP] = an N(2)-[(3R)-3-(acyloxy)acyl]-L-ornithine lipid + holo-[ACP]. It functions in the pathway lipid metabolism. Functionally, catalyzes the second step in the formation of ornithine lipids, which are phosphorus-free membrane lipids. Uses acyl-acyl carrier protein (acyl-AcpP) as an acyl donor and converts lyso-ornithine lipid (LOL) into ornithine lipid (OL). The protein is Lyso-ornithine lipid O-acyltransferase of Pseudomonas aeruginosa (strain ATCC 15692 / DSM 22644 / CIP 104116 / JCM 14847 / LMG 12228 / 1C / PRS 101 / PAO1).